The sequence spans 203 residues: N-(5'-phosphoribosyl)anthranilate isomerase (203 aa).

This sequence belongs to the TrpF family.

The catalysed reaction is N-(5-phospho-beta-D-ribosyl)anthranilate = 1-(2-carboxyphenylamino)-1-deoxy-D-ribulose 5-phosphate. It functions in the pathway amino-acid biosynthesis; L-tryptophan biosynthesis; L-tryptophan from chorismate: step 3/5. The sequence is that of N-(5'-phosphoribosyl)anthranilate isomerase from Caldanaerobacter subterraneus subsp. tengcongensis (strain DSM 15242 / JCM 11007 / NBRC 100824 / MB4) (Thermoanaerobacter tengcongensis).